Reading from the N-terminus, the 485-residue chain is Glutamyl-tRNA(Gln) amidotransferase subunit A (485 aa).

Residues K74 and S149 each act as charge relay system in the active site. S173 acts as the Acyl-ester intermediate in catalysis.

It belongs to the amidase family. GatA subfamily. As to quaternary structure, heterotrimer of A, B and C subunits.

The catalysed reaction is L-glutamyl-tRNA(Gln) + L-glutamine + ATP + H2O = L-glutaminyl-tRNA(Gln) + L-glutamate + ADP + phosphate + H(+). Functionally, allows the formation of correctly charged Gln-tRNA(Gln) through the transamidation of misacylated Glu-tRNA(Gln) in organisms which lack glutaminyl-tRNA synthetase. The reaction takes place in the presence of glutamine and ATP through an activated gamma-phospho-Glu-tRNA(Gln). The polypeptide is Glutamyl-tRNA(Gln) amidotransferase subunit A (Herminiimonas arsenicoxydans).